The sequence spans 455 residues: Beta-glucosidase A (455 aa).

Residue Glu165 is the Proton donor of the active site. Catalysis depends on Glu363, which acts as the Nucleophile.

This sequence belongs to the glycosyl hydrolase 1 family.

It carries out the reaction Hydrolysis of terminal, non-reducing beta-D-glucosyl residues with release of beta-D-glucose.. The protein is Beta-glucosidase A (bglA) of Caldicellulosiruptor saccharolyticus (Caldocellum saccharolyticum).